The sequence spans 504 residues: Cytochrome P450 3A1 (504 aa).

Cysteine 443 is a binding site for heme.

The protein belongs to the cytochrome P450 family. Heme serves as cofactor.

It localises to the endoplasmic reticulum membrane. Its subcellular location is the microsome membrane. It catalyses the reaction an organic molecule + reduced [NADPH--hemoprotein reductase] + O2 = an alcohol + oxidized [NADPH--hemoprotein reductase] + H2O + H(+). In terms of biological role, cytochromes P450 are a group of heme-thiolate monooxygenases. In liver microsomes, this enzyme is involved in an NADPH-dependent electron transport pathway. It oxidizes a variety of structurally unrelated compounds, including steroids, fatty acids, and xenobiotics. The protein is Cytochrome P450 3A1 (Cyp3a1) of Rattus norvegicus (Rat).